The chain runs to 436 residues: Acetyl-CoA decarbonylase/synthase complex subunit delta 2 (436 aa).

This sequence belongs to the CdhD family. As to quaternary structure, heterodimer of delta and gamma chains. The ACDS complex is made up of alpha, epsilon, beta, gamma and delta chains with a probable stoichiometry of (alpha(2)epsilon(2))(4)-beta(8)-(gamma(1)delta(1))(8) (Potential).

Its pathway is one-carbon metabolism; methanogenesis from acetate. In terms of biological role, part of a complex that catalyzes the reversible cleavage of acetyl-CoA, allowing growth on acetate as sole source of carbon and energy. Probably maintains the overall quaternary structure of the ACDS complex. The sequence is that of Acetyl-CoA decarbonylase/synthase complex subunit delta 2 (cdhD2) from Methanosarcina acetivorans (strain ATCC 35395 / DSM 2834 / JCM 12185 / C2A).